The sequence spans 322 residues: Serine/threonine-protein phosphatase PP1-2 (322 aa).

Mn(2+) contacts are provided by Asp-60, His-62, Asp-88, and Asn-120. His-121 functions as the Proton donor in the catalytic mechanism. Mn(2+) contacts are provided by His-169 and His-244. Residues 298 to 322 (RQRVSQSSIKESKSATNSLKKSKNN) are disordered. Positions 301-316 (VSQSSIKESKSATNSL) are enriched in polar residues.

Belongs to the PPP phosphatase family. PP-1 subfamily. Mn(2+) is required as a cofactor.

The enzyme catalyses O-phospho-L-seryl-[protein] + H2O = L-seryl-[protein] + phosphate. It catalyses the reaction O-phospho-L-threonyl-[protein] + H2O = L-threonyl-[protein] + phosphate. In terms of biological role, essential role in cell cycle control. PP1 is perhaps required for exit from mitosis. The polypeptide is Serine/threonine-protein phosphatase PP1-2 (sds21) (Schizosaccharomyces pombe (strain 972 / ATCC 24843) (Fission yeast)).